The sequence spans 249 residues: uncharacterized protein (249 aa).

This is an uncharacterized protein from Methanocaldococcus jannaschii (strain ATCC 43067 / DSM 2661 / JAL-1 / JCM 10045 / NBRC 100440) (Methanococcus jannaschii).